The sequence spans 169 residues: Probable phospholipid hydroperoxide glutathione peroxidase (169 aa).

The active site involves C43.

This sequence belongs to the glutathione peroxidase family. In terms of assembly, monomer. Has a tendency to form higher mass oligomers. Interacts with FUNDC1; this interaction promotes GPX4 recruitment into mitochondria through TOM/TIM complex where it is degraded by mitophagy.

The protein localises to the cytoplasm. It carries out the reaction a hydroperoxy polyunsaturated fatty acid + 2 glutathione = a hydroxy polyunsaturated fatty acid + glutathione disulfide + H2O. Protects cells and enzymes from oxidative damage, by catalyzing the reduction of hydrogen peroxide, lipid peroxides and organic hydroperoxide, by glutathione. This is Probable phospholipid hydroperoxide glutathione peroxidase (GPXle-1) from Solanum lycopersicum (Tomato).